We begin with the raw amino-acid sequence, 494 residues long: tRNA-2-methylthio-N(6)-dimethylallyladenosine synthase (494 aa).

Positions 5-121 constitute an MTTase N-terminal domain; sequence RTYQVRTYGC…LPALLERARV (117 aa). The [4Fe-4S] cluster site is built by C14, C50, C84, C158, C162, and C165. Residues 144 to 374 enclose the Radical SAM core domain; the sequence is RESVYAAWVA…LELQERISEE (231 aa). The TRAM domain maps to 377–446; that stretch reads AKFVGREVEV…PHHLVADSGI (70 aa). Basic and acidic residues predominate over residues 458–468; sequence WEARNAPERRP. The tract at residues 458 to 494 is disordered; it reads WEARNAPERRPTGVLLGMPKVGAPEPQPSVVGGCCDS.

Belongs to the methylthiotransferase family. MiaB subfamily. As to quaternary structure, monomer. Requires [4Fe-4S] cluster as cofactor.

Its subcellular location is the cytoplasm. It catalyses the reaction N(6)-dimethylallyladenosine(37) in tRNA + (sulfur carrier)-SH + AH2 + 2 S-adenosyl-L-methionine = 2-methylsulfanyl-N(6)-dimethylallyladenosine(37) in tRNA + (sulfur carrier)-H + 5'-deoxyadenosine + L-methionine + A + S-adenosyl-L-homocysteine + 2 H(+). Its function is as follows. Catalyzes the methylthiolation of N6-(dimethylallyl)adenosine (i(6)A), leading to the formation of 2-methylthio-N6-(dimethylallyl)adenosine (ms(2)i(6)A) at position 37 in tRNAs that read codons beginning with uridine. The sequence is that of tRNA-2-methylthio-N(6)-dimethylallyladenosine synthase from Thermobifida fusca (strain YX).